Here is a 654-residue protein sequence, read N- to C-terminus: WD repeat-containing protein 70 (654 aa).

Disordered stretches follow at residues 1–26 (MERS…VTMG) and 43–175 (FEQT…DSHE). Over residues 45 to 78 (QTRRTAVERSRKTLEAREKEEEMNREKELRRQNE) the composition is skewed to basic and acidic residues. A compositionally biased stretch (low complexity) spans 99 to 111 (RDTSSSESEQSSD). Positions 147-164 (NEEEEEAEEEEEEEEEEE) are enriched in acidic residues. Residues 165 to 175 (NPVHKIPDSHE) show a composition bias toward basic and acidic residues. WD repeat units follow at residues 180-219 (HGTK…ASFK), 227-268 (CECH…ECIK), 281-321 (GHTA…KQKS), 330-369 (GKKV…HPKF), 376-415 (DSGT…KPLF), 421-466 (PTMF…RVYE), and 469-508 (ITDA…QRGA). A Glycyl lysine isopeptide (Lys-Gly) (interchain with G-Cter in SUMO2) cross-link involves residue K296. K452 bears the N6-acetyllysine mark. Basic and acidic residues predominate over residues 540–565 (REPRQRSTRKQLEKDRLDPLKSHKPE). The tract at residues 540–579 (REPRQRSTRKQLEKDRLDPLKSHKPEPPVAGPGRGGRVGT) is disordered. At T579 the chain carries Phosphothreonine. Glycyl lysine isopeptide (Lys-Gly) (interchain with G-Cter in SUMO2) cross-links involve residues K590 and K596. 2 positions are modified to phosphoserine: S621 and S638. A disordered region spans residues 630–654 (KTMFAQVESDDEEAKNEPEWKKRKI). Residues 644 to 654 (KNEPEWKKRKI) show a composition bias toward basic and acidic residues.

This sequence belongs to the WD repeat GAD-1 family.

The sequence is that of WD repeat-containing protein 70 (WDR70) from Homo sapiens (Human).